Here is a 200-residue protein sequence, read N- to C-terminus: dITP/XTP pyrophosphatase (200 aa).

Position 8-13 (8-13 (TRNAGK)) interacts with substrate. Catalysis depends on Asp-72, which acts as the Proton acceptor. Residue Asp-72 participates in Mg(2+) binding. Substrate-binding positions include Ser-73, 155–158 (FGYD), Lys-178, and 183–184 (HR).

Belongs to the HAM1 NTPase family. Homodimer. Mg(2+) serves as cofactor.

It carries out the reaction XTP + H2O = XMP + diphosphate + H(+). It catalyses the reaction dITP + H2O = dIMP + diphosphate + H(+). The catalysed reaction is ITP + H2O = IMP + diphosphate + H(+). In terms of biological role, pyrophosphatase that catalyzes the hydrolysis of nucleoside triphosphates to their monophosphate derivatives, with a high preference for the non-canonical purine nucleotides XTP (xanthosine triphosphate), dITP (deoxyinosine triphosphate) and ITP. Seems to function as a house-cleaning enzyme that removes non-canonical purine nucleotides from the nucleotide pool, thus preventing their incorporation into DNA/RNA and avoiding chromosomal lesions. In Streptomyces avermitilis (strain ATCC 31267 / DSM 46492 / JCM 5070 / NBRC 14893 / NCIMB 12804 / NRRL 8165 / MA-4680), this protein is dITP/XTP pyrophosphatase.